The following is a 224-amino-acid chain: MPVRASIEPLTWENAFFGVNSAIVRITSEAPLLTPDALAPWSRVQAKIAASNTGELDALQQLGFSLVEGEVDLALPVNNVSDSGAVVAQETDIPALRQLASAAFAQSRFRAPWYAPDASGRFYAQWIENAVRGTFDHQCLILRAASGDIRGYVSLRELNATDARIGLLAGRGAGAELMQTALNWAYARGKTTLRVATQMGNTAALKRYIQSGANVESTAYWLYR.

Residues 94–224 enclose the N-acetyltransferase domain; it reads PALRQLASAA…VESTAYWLYR (131 aa). Acetyl-CoA contacts are provided by residues 168–174, Asn201, and Arg207; that span reads LAGRGAG. Tyr208 functions as the Proton donor in the catalytic mechanism.

This sequence belongs to the WecD family. Homodimer.

The catalysed reaction is dTDP-4-amino-4,6-dideoxy-alpha-D-galactose + acetyl-CoA = dTDP-4-acetamido-4,6-dideoxy-alpha-D-galactose + CoA + H(+). The protein operates within bacterial outer membrane biogenesis; enterobacterial common antigen biosynthesis. Functionally, catalyzes the acetylation of dTDP-fucosamine (dTDP-4-amino-4,6-dideoxy-D-galactose) to dTDP-Fuc4NAc, which is utilized in the biosynthesis of the enterobacterial common antigen (ECA). In Escherichia coli O6:H1 (strain CFT073 / ATCC 700928 / UPEC), this protein is dTDP-fucosamine acetyltransferase.